We begin with the raw amino-acid sequence, 155 residues long: MLKKKKTEVYALGEHISMSADKARRVIDQIRGRSYEETLMILELMPYRACYPILKLVYSAAANASYNMGSSETNLVISKAEVNEGTTVKKLKPRARGRSFPIKRSTCHITIVMKDISLDDEYGEMSSLKKTRWKKKSTAMTYRDMYNSGGLWDKK.

The protein belongs to the universal ribosomal protein uL22 family. In terms of assembly, part of the 50S ribosomal subunit.

The protein localises to the plastid. It is found in the chloroplast. Functionally, this protein binds specifically to 23S rRNA. The globular domain of the protein is located near the polypeptide exit tunnel on the outside of the subunit, while an extended beta-hairpin is found that lines the wall of the exit tunnel in the center of the 70S ribosome. This is Large ribosomal subunit protein uL22c (rpl22) from Solanum bulbocastanum (Wild potato).